A 177-amino-acid polypeptide reads, in one-letter code: Transcriptional repressor NrdR (177 aa).

A zinc finger lies at 3–34 (CLFCQHTDTRVIDSRVSEDGATIRRRRECEAC). The 91-residue stretch at 49-139 (PVIIKKDGGR…VYRSFQDVAD (91 aa)) folds into the ATP-cone domain.

This sequence belongs to the NrdR family. Zn(2+) serves as cofactor.

Its function is as follows. Negatively regulates transcription of bacterial ribonucleotide reductase nrd genes and operons by binding to NrdR-boxes. The polypeptide is Transcriptional repressor NrdR (Xylella fastidiosa (strain M23)).